Here is a 240-residue protein sequence, read N- to C-terminus: MGQKTNPIGLRLGINKNWRSRWFINYNTMPENVLGDYELRKFLKKKLYYAGISDIIIERTAKKIRITIFAAKPGIIIGKGGSEIEALKAELQKRIGNKELILNIKEERKPQLSAQLAAENVATQIERRVAFRRAMKKVIQSALKSGAKGIKVQVAGRLNGAEMARTEWYLEGRVPLHTLRAKIDYGFAEALTTYGIIGVKVWIFKGEVLQRKMNSDDTATPERKAPRRRKGRRNVNAKKN.

Residues 39–108 enclose the KH type-2 domain; that stretch reads LRKFLKKKLY…ELILNIKEER (70 aa). Residues 213 to 224 show a composition bias toward basic and acidic residues; sequence MNSDDTATPERK. The tract at residues 213–240 is disordered; that stretch reads MNSDDTATPERKAPRRRKGRRNVNAKKN. The segment covering 225–240 has biased composition (basic residues); the sequence is APRRRKGRRNVNAKKN.

This sequence belongs to the universal ribosomal protein uS3 family. As to quaternary structure, part of the 30S ribosomal subunit. Forms a tight complex with proteins S10 and S14.

Functionally, binds the lower part of the 30S subunit head. Binds mRNA in the 70S ribosome, positioning it for translation. In Nautilia profundicola (strain ATCC BAA-1463 / DSM 18972 / AmH), this protein is Small ribosomal subunit protein uS3.